The sequence spans 511 residues: GMP synthase [glutamine-hydrolyzing] (511 aa).

The Glutamine amidotransferase type-1 domain occupies 5–195; sequence DIIVLDFGSQ…AKYICDCEST (191 aa). Catalysis depends on cysteine 82, which acts as the Nucleophile. Active-site residues include histidine 169 and glutamate 171. The GMPS ATP-PPase domain occupies 196–386; it reads WNMGNFAKIK…LGLSPDLVYR (191 aa). 223–229 lines the ATP pocket; sequence SGGVDSS.

Homodimer.

The enzyme catalyses XMP + L-glutamine + ATP + H2O = GMP + L-glutamate + AMP + diphosphate + 2 H(+). The protein operates within purine metabolism; GMP biosynthesis; GMP from XMP (L-Gln route): step 1/1. Its function is as follows. Catalyzes the synthesis of GMP from XMP. This is GMP synthase [glutamine-hydrolyzing] from Campylobacter hominis (strain ATCC BAA-381 / DSM 21671 / CCUG 45161 / LMG 19568 / NCTC 13146 / CH001A).